The primary structure comprises 194 residues: uncharacterized protein (194 aa).

The protein to A.aeolicus AQ_423.

This is an uncharacterized protein from Aquifex aeolicus (strain VF5).